The sequence spans 313 residues: Ribosomal RNA small subunit methyltransferase H (313 aa).

Residues 35 to 37, aspartate 55, phenylalanine 79, aspartate 101, and glutamine 108 contribute to the S-adenosyl-L-methionine site; that span reads GGH.

It belongs to the methyltransferase superfamily. RsmH family.

The protein localises to the cytoplasm. The catalysed reaction is cytidine(1402) in 16S rRNA + S-adenosyl-L-methionine = N(4)-methylcytidine(1402) in 16S rRNA + S-adenosyl-L-homocysteine + H(+). Specifically methylates the N4 position of cytidine in position 1402 (C1402) of 16S rRNA. In Klebsiella pneumoniae subsp. pneumoniae (strain ATCC 700721 / MGH 78578), this protein is Ribosomal RNA small subunit methyltransferase H.